The primary structure comprises 278 residues: MATH domain and coiled-coil domain-containing protein At1g31400 (278 aa).

In terms of domain architecture, MATH spans 6-131; that stretch reads EKRITWTIKN…SGQVKIVAEV (126 aa). Residues 232 to 267 are a coiled coil; that stretch reads KLDWLEKKLKEVGKTRMQQLEQNLKDLKESLCWSSD.

This Arabidopsis thaliana (Mouse-ear cress) protein is MATH domain and coiled-coil domain-containing protein At1g31400.